Here is a 315-residue protein sequence, read N- to C-terminus: Gamma-hemolysin component C (315 aa).

Positions 1–29 (MLKNKILTTTLSVSLLAPLANPLLENAKA) are cleaved as a signal peptide.

It belongs to the aerolysin family. As to quaternary structure, toxicity requires sequential binding and synergistic association of a class S and a class F component which form heterooligomeric complexes. HlgC (class S) associates with HlgB (class F) thus forming an CB toxin.

In terms of biological role, toxin that seems to act by forming pores in the membrane of the cell. Has a hemolytic and a leucotoxic activity. The polypeptide is Gamma-hemolysin component C (hlgC) (Staphylococcus aureus (strain COL)).